A 509-amino-acid polypeptide reads, in one-letter code: Probable malate:quinone oxidoreductase (509 aa).

A disordered region spans residues 490 to 509; sequence LGLNEKEPVSGASEKELVYS. A compositionally biased stretch (basic and acidic residues) spans 493–509; that stretch reads NEKEPVSGASEKELVYS.

This sequence belongs to the MQO family. Requires FAD as cofactor.

The catalysed reaction is (S)-malate + a quinone = a quinol + oxaloacetate. The protein operates within carbohydrate metabolism; tricarboxylic acid cycle; oxaloacetate from (S)-malate (quinone route): step 1/1. This chain is Probable malate:quinone oxidoreductase, found in Geobacillus sp. (strain WCH70).